We begin with the raw amino-acid sequence, 115 residues long: U3-lycotoxin-Ls1k (115 aa).

Positions 1 to 20 (MKFVLLFGVLLVALFSYSSA) are cleaved as a signal peptide. Positions 21 to 44 (EMLDDFGQADEDELLSLIEKEEAR) are excised as a propeptide. Cystine bridges form between Cys-48–Cys-63, Cys-55–Cys-72, Cys-62–Cys-87, and Cys-74–Cys-85.

The protein belongs to the neurotoxin 19 (CSTX) family. 01 subfamily. Expressed by the venom gland.

Its subcellular location is the secreted. The sequence is that of U3-lycotoxin-Ls1k from Lycosa singoriensis (Wolf spider).